A 757-amino-acid polypeptide reads, in one-letter code: Mitofusin-2 (757 aa).

Residues 1 to 604 (MSLLFSRCNS…TQEEFMVSMV (604 aa)) lie on the Cytoplasmic side of the membrane. Residues 30-94 (KHFVTAKKKI…VRGISEVLAR (65 aa)) are part of a helix bundle domain, formed by helices from N-terminal and C-terminal regions. One can recognise a Dynamin-type G domain in the interval 93 to 342 (ARRHMKVAFF…VRMFEFQNFE (250 aa)). Positions 103 to 110 (GRTSNGKS) are G1 motif. 106–111 (SNGKST) provides a ligand contact to GTP. Thr111 carries the post-translational modification Phosphothreonine; by PINK1. The interval 129–130 (TT) is G2 motif. Residues 199 to 202 (DSPG) form a G3 motif region. 258 to 261 (NRWD) is a GTP binding site. Residues 258-261 (NRWD) form a G4 motif region. A region of interest (G5 motif) is located at residue Glu288. Residues Ser305 and Lys307 each contribute to the GTP site. Residues 359–385 (EQHTVRAKQIAEAVRLIMDSLHMAARE) are part of a helix bundle domain, formed by helices from N-terminal and C-terminal regions. The stretch at 391 to 434 (EEMREERQDRLKFIDKQLELLAQDYKLRIKQITEEVERQVSTAM) forms a coiled coil. Residue Ser442 is modified to Phosphoserine; by PINK1. Residues 605–625 (TGLASLTSRTSMGILVVGGVV) form a helical membrane-spanning segment. A topological domain (mitochondrial intermembrane) is located at residue Trp626. The helical transmembrane segment at 627–647 (KAVGWRLIALSFGLYGLLYVY) threads the bilayer. Topologically, residues 648–757 (ERLTWTTKAK…FTHQYLQPSR (110 aa)) are cytoplasmic. The stretch at 695-738 (TFAHLCQQVDVTRENLEQEIAAMNKKIEVLDSLQSKAKLLRNKA) forms a coiled coil. The part of a helix bundle domain, formed by helices from N-terminal and C-terminal regions stretch occupies residues 722–753 (EVLDSLQSKAKLLRNKAGWLDSELNMFTHQYL).

The protein belongs to the TRAFAC class dynamin-like GTPase superfamily. Dynamin/Fzo/YdjA family. Mitofusin subfamily. Forms homomultimers and heteromultimers with MFN1. Oligomerization is essential for mitochondrion fusion. Interacts with VAT1. Interacts with STOML2; may form heterooligomers. Interacts (phosphorylated) with PRKN. Interacts with EIF2AK3. Interacts with THG1L; THG1L probably functions as a guanyl-nucleotide exchange factor/GEF, activating MFN2. Phosphorylated by PINK1. In terms of processing, ubiquitinated by non-degradative ubiquitin by PRKN, promoting mitochondrial fusion; deubiquitination by USP30 inhibits mitochondrial fusion. Ubiquitinated by HUWE1 when dietary stearate (C18:0) levels are low; ubiquitination inhibits mitochondrial fusion. As to expression, ubiquitous; expressed at low level. Highly expressed in heart and kidney.

The protein localises to the mitochondrion outer membrane. The catalysed reaction is GTP + H2O = GDP + phosphate + H(+). Functionally, mitochondrial outer membrane GTPase that mediates mitochondrial clustering and fusion. Mitochondria are highly dynamic organelles, and their morphology is determined by the equilibrium between mitochondrial fusion and fission events. Overexpression induces the formation of mitochondrial networks. Membrane clustering requires GTPase activity and may involve a major rearrangement of the coiled coil domains. Plays a central role in mitochondrial metabolism and may be associated with obesity and/or apoptosis processes. Plays an important role in the regulation of vascular smooth muscle cell proliferation. Involved in the clearance of damaged mitochondria via selective autophagy (mitophagy). Is required for PRKN recruitment to dysfunctional mitochondria. Involved in the control of unfolded protein response (UPR) upon ER stress including activation of apoptosis and autophagy during ER stress. Acts as an upstream regulator of EIF2AK3 and suppresses EIF2AK3 activation under basal conditions. The sequence is that of Mitofusin-2 from Homo sapiens (Human).